The chain runs to 92 residues: N(2)-fixation sustaining protein CowN (92 aa).

It belongs to the CowN family.

Its function is as follows. Is required to sustain N(2)-dependent growth in the presence of low levels of carbon monoxide (CO). Probably acts by protecting the N(2) fixation ability of the nitrogenase complex, which is inactivated in the presence of CO. This Rhodopseudomonas palustris (strain BisA53) protein is N(2)-fixation sustaining protein CowN.